We begin with the raw amino-acid sequence, 309 residues long: Methionyl-tRNA formyltransferase (309 aa).

Position 112 to 115 (112 to 115 (SLLP)) interacts with (6S)-5,6,7,8-tetrahydrofolate.

The protein belongs to the Fmt family.

The enzyme catalyses L-methionyl-tRNA(fMet) + (6R)-10-formyltetrahydrofolate = N-formyl-L-methionyl-tRNA(fMet) + (6S)-5,6,7,8-tetrahydrofolate + H(+). In terms of biological role, attaches a formyl group to the free amino group of methionyl-tRNA(fMet). The formyl group appears to play a dual role in the initiator identity of N-formylmethionyl-tRNA by promoting its recognition by IF2 and preventing the misappropriation of this tRNA by the elongation apparatus. This Bartonella tribocorum (strain CIP 105476 / IBS 506) protein is Methionyl-tRNA formyltransferase.